Consider the following 577-residue polypeptide: Aspartate--tRNA ligase (577 aa).

L-aspartate is bound at residue Glu171. The tract at residues 195–198 is aspartate; sequence QLFK. Arg217 serves as a coordination point for L-aspartate. ATP is bound by residues 217–219 and Gln226; that span reads RDE. His437 is an L-aspartate binding site. Residue Glu472 participates in ATP binding. Arg479 lines the L-aspartate pocket. ATP is bound at residue 524 to 527; that stretch reads GFDR.

It belongs to the class-II aminoacyl-tRNA synthetase family. Type 1 subfamily. As to quaternary structure, homodimer.

Its subcellular location is the cytoplasm. It carries out the reaction tRNA(Asp) + L-aspartate + ATP = L-aspartyl-tRNA(Asp) + AMP + diphosphate. Catalyzes the attachment of L-aspartate to tRNA(Asp) in a two-step reaction: L-aspartate is first activated by ATP to form Asp-AMP and then transferred to the acceptor end of tRNA(Asp). The sequence is that of Aspartate--tRNA ligase from Deinococcus deserti (strain DSM 17065 / CIP 109153 / LMG 22923 / VCD115).